The primary structure comprises 145 residues: Ribonuclease P protein component (145 aa).

Residues 119–145 (PLPAAPGTMPPARTVRPSSPSPTEPEL) form a disordered region.

Belongs to the RnpA family. Consists of a catalytic RNA component (M1 or rnpB) and a protein subunit.

It catalyses the reaction Endonucleolytic cleavage of RNA, removing 5'-extranucleotides from tRNA precursor.. In terms of biological role, RNaseP catalyzes the removal of the 5'-leader sequence from pre-tRNA to produce the mature 5'-terminus. It can also cleave other RNA substrates such as 4.5S RNA. The protein component plays an auxiliary but essential role in vivo by binding to the 5'-leader sequence and broadening the substrate specificity of the ribozyme. The sequence is that of Ribonuclease P protein component from Xanthomonas euvesicatoria pv. vesicatoria (strain 85-10) (Xanthomonas campestris pv. vesicatoria).